The primary structure comprises 728 residues: Diacylglycerol kinase 1 (728 aa).

The chain crosses the membrane as a helical span at residues 27–48; it reads GLMFSCFVAALVGILTIAYTAF. 2 Phorbol-ester/DAG-type zinc fingers span residues 79–137 and 149–212; these read PHSW…PKDC and VHQW…GDIC. Disordered stretches follow at residues 265–296 and 308–336; these read KQTNETSADTGNSGSNCDESTESTADTGPTVN and VMNGDSSNGDSDSNGKLEKKPSVKRTGSF. Positions 267-294 are enriched in polar residues; the sequence is TNETSADTGNSGSNCDESTESTADTGPT. A compositionally biased stretch (low complexity) spans 310-319; the sequence is NGDSSNGDSD. One can recognise a DAGKc domain in the interval 357 to 496; sequence SDARPLLVFI…LDRWKVSILN (140 aa). Glycyl lysine isopeptide (Lys-Gly) (interchain with G-Cter in ubiquitin) cross-links involve residues Lys491 and Lys500.

It belongs to the eukaryotic diacylglycerol kinase family. As to quaternary structure, monomer. As to expression, expressed in roots, shoots, and leaves.

The protein localises to the membrane. It catalyses the reaction a 1,2-diacyl-sn-glycerol + ATP = a 1,2-diacyl-sn-glycero-3-phosphate + ADP + H(+). Phosphorylates the second messenger diacylglycerol (DAG) to generate phosphatidic acid (PA), another important signaling molecule. PA is required for plant development and responses to abiotic stress and pathogen attack. May be involved in the accumulation of PA during cold stress. This is Diacylglycerol kinase 1 (DGK1) from Arabidopsis thaliana (Mouse-ear cress).